The sequence spans 284 residues: MTAIKLDGNLYRGEIFADLEQRVAALKEKGIVPGLATVLVGDDPASHSYVKMKHRDCEQIGVNSIRKDLPADVTQEELFAVIDELNNDDSCTGYIVQLPLPKHLDENAVLERIDPAKDADGLHPVNLGKLVLNEPAPLPCTPNGSISLLRRFGVELDGAKVVVIGRGVTVGRPIGLMLTRRSENSTVTLCHTGTKDLAAETRAADVIIAAAGQPHMLTADMVKPGAAVLDVGVSRKDGKLLGDVHPDVWEVAGAVSPNPGGVGPLTRAFLVHNVVERAEKLAGL.

NADP(+)-binding positions include 165–167 (GRG), T192, and V233.

The protein belongs to the tetrahydrofolate dehydrogenase/cyclohydrolase family. Homodimer.

It catalyses the reaction (6R)-5,10-methylene-5,6,7,8-tetrahydrofolate + NADP(+) = (6R)-5,10-methenyltetrahydrofolate + NADPH. The enzyme catalyses (6R)-5,10-methenyltetrahydrofolate + H2O = (6R)-10-formyltetrahydrofolate + H(+). The protein operates within one-carbon metabolism; tetrahydrofolate interconversion. Catalyzes the oxidation of 5,10-methylenetetrahydrofolate to 5,10-methenyltetrahydrofolate and then the hydrolysis of 5,10-methenyltetrahydrofolate to 10-formyltetrahydrofolate. The polypeptide is Bifunctional protein FolD (Corynebacterium glutamicum (strain R)).